Reading from the N-terminus, the 136-residue chain is Histone H3.1/H3.2 (136 aa).

The disordered stretch occupies residues 1-42; that stretch reads MARTKQTARKSTGGKAPRKQLASKAARKAAPATGGVKKPHRY. Lys5 is modified (N6,N6,N6-trimethyllysine; alternate). At Lys5 the chain carries N6,N6-dimethyllysine; alternate. 2 positions are modified to N6-methyllysine; alternate: Lys5 and Lys10. Residue Lys10 is modified to N6-acetyllysine; alternate. Ser11 is subject to Phosphoserine. Lys15 carries the N6,N6-dimethyllysine; alternate modification. Residues Lys15, Lys19, Lys24, Lys28, and Lys37 each carry the N6-acetyllysine; alternate modification. Residues Lys19, Lys24, Lys28, and Lys37 each carry the N6-methyllysine; alternate modification. The segment covering 19–32 has biased composition (low complexity); the sequence is KQLASKAARKAAPA. N6,N6,N6-trimethyllysine; alternate occurs at positions 28 and 37. 2 positions are modified to N6,N6-dimethyllysine; alternate: Lys28 and Lys37. N6-acetyllysine is present on residues Lys57 and Lys65. Lys80 is subject to N6,N6,N6-trimethyllysine; alternate. Lys80 carries the post-translational modification N6,N6-dimethyllysine; alternate. At Lys80 the chain carries N6-methyllysine; alternate.

It belongs to the histone H3 family. As to quaternary structure, the nucleosome is a histone octamer containing two molecules each of H2A, H2B, H3 and H4 assembled in one H3-H4 heterotetramer and two H2A-H2B heterodimers. The octamer wraps approximately 147 bp of DNA. In terms of processing, phosphorylated by ark1 to form H3S10ph in a cell cycle-dependent manner during mitosis and meiosis. H3S10ph is also formed by ssp2, promotes subsequent H3K14ac formation by gcn5, and is required for transcriptional activation through TBP recruitment to the promoters. Dephosphorylation is performed by sds21. Mono-, di- and trimethylated by the COMPASS complex to form H3K4me1/2/3. H3K4me activates gene expression by regulating transcription elongation and plays a role in telomere length maintenance. H3K4me enrichment correlates with transcription levels, and occurs in a 5' to 3' gradient with H3K4me3 enrichment at the 5'-end of genes, shifting to H3K4me2 and then H3K4me1. Methylated by clr4 to form H3K9me1. H3K9me1 represents a specific tag for epigenetic transcriptional repression by recruiting swi6/HP1 to methylated histones. Targeting to histone probably involves clr3 and rik1. Essential for silencing of centromeres and directional switching of the mating type. Methylated by set2 to form H3K36me. H3K36me represses gene expression. Methylated by dot1 to form H3K79me. H3K79me is required for association of SIR proteins with telomeric regions and for telomeric silencing. The COMPASS-mediated formation of H3K4me2/3 and the dot1-mediated formation of H3K79me require H2BK123ub1. Post-translationally, acetylation of histone H3 leads to transcriptional activation. H3K14ac formation by gcn5 is promoted by H3S10ph. H3K14ac can also be formed by esa1. H3K56ac formation occurs predominantly in newly synthesized H3 molecules during G1, S and G2/M of the cell cycle and may be involved in DNA repair.

It localises to the nucleus. It is found in the chromosome. In terms of biological role, core component of nucleosome. Nucleosomes wrap and compact DNA into chromatin, limiting DNA accessibility to the cellular machineries which require DNA as a template. Histones thereby play a central role in transcription regulation, DNA repair, DNA replication and chromosomal stability. DNA accessibility is regulated via a complex set of post-translational modifications of histones, also called histone code, and nucleosome remodeling. The chain is Histone H3.1/H3.2 (hht1) from Schizosaccharomyces pombe (strain 972 / ATCC 24843) (Fission yeast).